A 643-amino-acid chain; its full sequence is Cytoplasmic dynein 1 intermediate chain 1 (643 aa).

Composition is skewed to basic and acidic residues over residues 1-13 (MSDK…ELER) and 20-60 (QIRE…RETE). 2 disordered regions span residues 1-65 (MSDK…LLQS) and 96-123 (MSPS…RTLQ). S2 bears the N-acetylserine mark. Residues 2–123 (SDKSDLKAEL…DLGPLTRTLQ (122 aa)) form an interaction with DCTN1 region. S50 and S100 each carry phosphoserine. Positions 96 to 107 (MSPSSKSVSTPS) are enriched in low complexity. Position 105 is a phosphothreonine (T105). S107 and S111 each carry phosphoserine. The segment at 145–161 (KLGVSKVTQVDFLPREV) is interaction with DYNLT1. The disordered stretch occupies residues 167–219 (ETQTPLATHQSEEDEEDEEMVEPKVGHDSELENQDKKQETKEAPPRELTEEEK). Phosphothreonine is present on T174. A phosphoserine mark is found at S177 and S195. Residues 187–219 (VEPKVGHDSELENQDKKQETKEAPPRELTEEEK) are compositionally biased toward basic and acidic residues. WD repeat units follow at residues 283-332 (SKHR…TTPE), 336-376 (HCQS…RTPV), 385-426 (AHTH…TPQE), 435-475 (SKPV…AGIG), 480-525 (GHQG…PLYS), 528-568 (DNAD…EVPT), and 574-613 (EGAY…VPHN). S633 is modified (phosphoserine).

It belongs to the dynein intermediate chain family. Homodimer. The cytoplasmic dynein 1 complex consists of two catalytic heavy chains (HCs) and a number of non-catalytic subunits presented by intermediate chains (ICs), light intermediate chains (LICs) and light chains (LCs); the composition seems to vary in respect to the IC, LIC and LC composition. The heavy chain homodimer serves as a scaffold for the probable homodimeric assembly of the respective non-catalytic subunits. The ICs and LICs bind directly to the HC dimer and the LCs assemble on the IC dimer. Isoform 1, isoform 2 and isoform 3 interact with DYNC1H1. Isoform 1, isoform 2 and isoform 3 interact with DYNLT3. Isoform 1, isoform 2 and isoform 3 interact with DYNLT1. Interacts with DCTN1. Interacts with MCRS1; the interaction is required for the proper distribution of centriolar satellites. As to expression, high levels seen in the brain and testis, while a lower level expression is seen in the liver, spleen, kidney, lung, skeletal muscle and heart.

It is found in the cytoplasm. It localises to the chromosome. The protein resides in the centromere. The protein localises to the kinetochore. Its subcellular location is the cytoskeleton. It is found in the spindle pole. Acts as one of several non-catalytic accessory components of the cytoplasmic dynein 1 complex that are thought to be involved in linking dynein to cargos and to adapter proteins that regulate dynein function. Cytoplasmic dynein 1 acts as a motor for the intracellular retrograde motility of vesicles and organelles along microtubules. The intermediate chains mediate the binding of dynein to dynactin via its 150 kDa component (p150-glued) DCTN1. May play a role in mediating the interaction of cytoplasmic dynein with membranous organelles and kinetochores. This chain is Cytoplasmic dynein 1 intermediate chain 1 (Dync1i1), found in Rattus norvegicus (Rat).